The primary structure comprises 804 residues: ABC transporter aclQ (804 aa).

The next 9 helical transmembrane spans lie at L3 to L23, F52 to I72, I97 to P117, L119 to F139, L155 to F175, H206 to S226, F239 to V259, L349 to I369, and A373 to M393. Positions I236 to N518 constitute an ABC transmembrane type-1 domain. Residue N460 is glycosylated (N-linked (GlcNAc...) asparagine). 2 helical membrane-spanning segments follow: residues N464–A484 and V489–F509. The 235-residue stretch at V552–K786 folds into the ABC transporter domain. Residue G585–S592 coordinates ATP. 2 N-linked (GlcNAc...) asparagine glycosylation sites follow: N639 and N797.

Belongs to the ABC transporter superfamily. ABCB family. Heavy Metal importer (TC 3.A.1.210) subfamily.

The protein localises to the membrane. Functionally, ABC transporter; part of the gene cluster that mediates the biosynthesis of aspirochlorine (or antibiotic A30641), an unusual halogenated spiro compound with distinctive antifungal properties due to selective inhibition of protein biosynthesis, and which is also active against bacteria, viruses, and murine tumor cells. This is ABC transporter aclQ from Aspergillus oryzae (strain ATCC 42149 / RIB 40) (Yellow koji mold).